The sequence spans 346 residues: NADH-quinone oxidoreductase subunit H (346 aa).

A run of 8 helical transmembrane segments spans residues 6–26 (ILFW…ACAY), 76–96 (VMYL…WSVV), 128–148 (ILFL…AGWA), 166–186 (ISYE…SGSL), 198–218 (LWNI…VAMF), 260–280 (ITMS…PFGI), 289–309 (LFGL…FLWV), and 324–344 (LGWK…SIYI).

The protein belongs to the complex I subunit 1 family. In terms of assembly, NDH-1 is composed of 14 different subunits. Subunits NuoA, H, J, K, L, M, N constitute the membrane sector of the complex.

The protein localises to the cell inner membrane. The catalysed reaction is a quinone + NADH + 5 H(+)(in) = a quinol + NAD(+) + 4 H(+)(out). Its function is as follows. NDH-1 shuttles electrons from NADH, via FMN and iron-sulfur (Fe-S) centers, to quinones in the respiratory chain. The immediate electron acceptor for the enzyme in this species is believed to be ubiquinone. Couples the redox reaction to proton translocation (for every two electrons transferred, four hydrogen ions are translocated across the cytoplasmic membrane), and thus conserves the redox energy in a proton gradient. This subunit may bind ubiquinone. In Leptospira interrogans serogroup Icterohaemorrhagiae serovar copenhageni (strain Fiocruz L1-130), this protein is NADH-quinone oxidoreductase subunit H.